An 85-amino-acid chain; its full sequence is Progonadoliberin-2 (85 aa).

A signal peptide spans M1–A23. Q24 is modified (pyrrolidone carboxylic acid). The residue at position 33 (G33) is a Glycine amide.

This sequence belongs to the GnRH family. In terms of tissue distribution, expressed in only one cell group in the mesencephalon.

Its subcellular location is the secreted. Its function is as follows. Stimulates the secretion of gonadotropins. This chain is Progonadoliberin-2 (gnrh2), found in Haplochromis burtoni (Burton's mouthbrooder).